The chain runs to 347 residues: D-alanine--D-alanine ligase (347 aa).

One can recognise an ATP-grasp domain in the interval 131-333 (KRVLESAGIA…YPELIERLVD (203 aa)). Residue 161–216 (EEKLAYPVFTKPSNMGSSVGISKSENQEELRQALKLAFRYDSRVLVEQGVNAREIE) coordinates ATP. 3 residues coordinate Mg(2+): Asp287, Glu300, and Asn302.

It belongs to the D-alanine--D-alanine ligase family. Mg(2+) serves as cofactor. The cofactor is Mn(2+).

It is found in the cytoplasm. It carries out the reaction 2 D-alanine + ATP = D-alanyl-D-alanine + ADP + phosphate + H(+). It participates in cell wall biogenesis; peptidoglycan biosynthesis. In terms of biological role, cell wall formation. The polypeptide is D-alanine--D-alanine ligase (Streptococcus pneumoniae serotype 19F (strain G54)).